A 559-amino-acid chain; its full sequence is Polypeptide N-acetylgalactosaminyltransferase 1 (559 aa).

Residues 1-8 lie on the Cytoplasmic side of the membrane; it reads MRKFAYCK. The helical; Signal-anchor for type II membrane protein transmembrane segment at 9–28 threads the bilayer; that stretch reads VVLATSLIWVLLDMFLLLYF. Residues 29-559 lie on the Lumenal side of the membrane; that stretch reads SECNKCDEKK…LRNVTLPEIF (531 aa). The disordered stretch occupies residues 45–65; it reads GDVLEPVQKPHEGPGEMGKPV. N-linked (GlcNAc...) asparagine glycosylation is present at N95. 5 disulfide bridges follow: C106-C339, C330-C408, C442-C459, C482-C497, and C523-C540. Positions 115–225 are catalytic subdomain A; it reads LPTTSVVIVF…VGWLEPLLAR (111 aa). D156 and R186 together coordinate substrate. Positions 209 and 211 each coordinate Mn(2+). A catalytic subdomain B region spans residues 285–347; it reads PVRTPTMAGG…TCSHVGHVFR (63 aa). W316 contributes to the substrate binding site. H344 lines the Mn(2+) pocket. Residues R347 and Y352 each coordinate substrate. The Ricin B-type lectin domain occupies 429–551; the sequence is FSLGEIRNVE…GSRSQQWLLR (123 aa). An N-linked (GlcNAc...) asparagine glycan is attached at N552.

This sequence belongs to the glycosyltransferase 2 family. GalNAc-T subfamily. Requires Mn(2+) as cofactor. Widely expressed. Expressed in all tissues tested.

It localises to the golgi apparatus. The protein localises to the golgi stack membrane. The protein resides in the secreted. The catalysed reaction is L-seryl-[protein] + UDP-N-acetyl-alpha-D-galactosamine = a 3-O-[N-acetyl-alpha-D-galactosaminyl]-L-seryl-[protein] + UDP + H(+). The enzyme catalyses L-threonyl-[protein] + UDP-N-acetyl-alpha-D-galactosamine = a 3-O-[N-acetyl-alpha-D-galactosaminyl]-L-threonyl-[protein] + UDP + H(+). It functions in the pathway protein modification; protein glycosylation. In terms of biological role, catalyzes the initial reaction in O-linked oligosaccharide biosynthesis, the transfer of an N-acetyl-D-galactosamine residue to a serine or threonine residue on the protein receptor. Has a broad spectrum of substrates such as apomucin-, MUC5AC-, MUC1- and MUC2-derived peptides. This is Polypeptide N-acetylgalactosaminyltransferase 1 from Homo sapiens (Human).